Consider the following 497-residue polypeptide: Intermediate filament protein A (497 aa).

Residues 1 to 32 form a coil 1A region; the sequence is MSDLNDRLASYIEKVRFLEAQNRKLAADLDLL. Positions 1–342 constitute an IF rod domain; the sequence is MSDLNDRLAS…KMLEGEENRA (342 aa). The tract at residues 33–46 is linker 1; it reads RGRWGKDTLSVRAM. The interval 47–184 is coil 1B; sequence YEGELQEARK…RVHDQEIAEL (138 aa). Residues 185–202 form a linker 12 region; it reads QAMASRDTTPENREYFKN. The segment at 203 to 342 is coil 2; the sequence is ELASAIRDIR…KMLEGEENRA (140 aa). The tail stretch occupies residues 343 to 497; sequence GLRQLVEQVV…THIQRSSHTI (155 aa). The LTD domain occupies 375-493; it reads SRTSFQRSAK…EERATHIQRS (119 aa).

This sequence belongs to the intermediate filament family. In terms of assembly, a and B can form homopolymers. As to expression, giant body muscle cells.

The protein localises to the cytoplasm. The chain is Intermediate filament protein A from Ascaris suum (Pig roundworm).